Here is a 333-residue protein sequence, read N- to C-terminus: Adenosine deaminase (333 aa).

Residues histidine 12 and histidine 14 each contribute to the Zn(2+) site. Positions 14, 16, and 170 each coordinate substrate. Position 197 (histidine 197) interacts with Zn(2+). Glutamate 200 functions as the Proton donor in the catalytic mechanism. A Zn(2+)-binding site is contributed by aspartate 278. A substrate-binding site is contributed by aspartate 279.

It belongs to the metallo-dependent hydrolases superfamily. Adenosine and AMP deaminases family. Adenosine deaminase subfamily. Zn(2+) serves as cofactor.

The enzyme catalyses adenosine + H2O + H(+) = inosine + NH4(+). It catalyses the reaction 2'-deoxyadenosine + H2O + H(+) = 2'-deoxyinosine + NH4(+). In terms of biological role, catalyzes the hydrolytic deamination of adenosine and 2-deoxyadenosine. This chain is Adenosine deaminase, found in Photorhabdus laumondii subsp. laumondii (strain DSM 15139 / CIP 105565 / TT01) (Photorhabdus luminescens subsp. laumondii).